Reading from the N-terminus, the 241-residue chain is Large ribosomal subunit protein uL3 (241 aa).

The protein belongs to the universal ribosomal protein uL3 family. In terms of assembly, part of the 50S ribosomal subunit. Forms a cluster with proteins L14 and L19.

In terms of biological role, one of the primary rRNA binding proteins, it binds directly near the 3'-end of the 23S rRNA, where it nucleates assembly of the 50S subunit. The sequence is that of Large ribosomal subunit protein uL3 from Aquifex aeolicus (strain VF5).